The primary structure comprises 105 residues: Met repressor (105 aa).

The protein belongs to the MetJ family. In terms of assembly, homodimer.

The protein localises to the cytoplasm. In terms of biological role, this regulatory protein, when combined with SAM (S-adenosylmethionine) represses the expression of the methionine regulon and of enzymes involved in SAM synthesis. This chain is Met repressor, found in Sodalis glossinidius (strain morsitans).